A 144-amino-acid chain; its full sequence is Large ribosomal subunit protein uL13 (144 aa).

This sequence belongs to the universal ribosomal protein uL13 family. In terms of assembly, part of the 50S ribosomal subunit.

This protein is one of the early assembly proteins of the 50S ribosomal subunit, although it is not seen to bind rRNA by itself. It is important during the early stages of 50S assembly. The chain is Large ribosomal subunit protein uL13 from Natronomonas pharaonis (strain ATCC 35678 / DSM 2160 / CIP 103997 / JCM 8858 / NBRC 14720 / NCIMB 2260 / Gabara) (Halobacterium pharaonis).